The sequence spans 487 residues: Uronate isomerase (487 aa).

It belongs to the metallo-dependent hydrolases superfamily. Uronate isomerase family.

The enzyme catalyses D-glucuronate = D-fructuronate. It catalyses the reaction aldehydo-D-galacturonate = keto-D-tagaturonate. It participates in carbohydrate metabolism; pentose and glucuronate interconversion. This chain is Uronate isomerase, found in Caulobacter vibrioides (strain ATCC 19089 / CIP 103742 / CB 15) (Caulobacter crescentus).